The primary structure comprises 903 residues: Probable dipeptidyl-aminopeptidase B (903 aa).

A disordered region spans residues 1–83; it reads MGKFEDDGNS…PLISSGTKTG (83 aa). The Cytoplasmic segment spans residues 1-90; it reads MGKFEDDGNS…KTGSSSRLRK (90 aa). Over residues 10–37 the composition is skewed to polar residues; the sequence is SESVPLTRQRSESLASQTSTDSGLSIAS. The helical; Signal-anchor for type II membrane protein transmembrane segment at 91–111 threads the bilayer; it reads IVWLLVLLCVGGWVLSFVLFL. The Vacuolar portion of the chain corresponds to 112–903; that stretch reads TQKRPDTAAL…TANPKPQEST (792 aa). Residues 121–143 form a disordered region; the sequence is LSSASTVEIHEPGPATGGTSHGK. 3 N-linked (GlcNAc...) asparagine glycosylation sites follow: Asn268, Asn349, and Asn640. Residue Ser754 is the Charge relay system of the active site. Asn808 is a glycosylation site (N-linked (GlcNAc...) asparagine). Catalysis depends on charge relay system residues Asp831 and His864.

Belongs to the peptidase S9B family.

Its subcellular location is the vacuole membrane. It catalyses the reaction Release of an N-terminal dipeptide, Xaa-Yaa-|-Zaa-, from a polypeptide, preferentially when Yaa is Pro, provided Zaa is neither Pro nor hydroxyproline.. Type IV dipeptidyl-peptidase which removes N-terminal dipeptides sequentially from polypeptides having unsubstituted N-termini provided that the penultimate residue is proline. The protein is Probable dipeptidyl-aminopeptidase B (dapB) of Penicillium rubens (strain ATCC 28089 / DSM 1075 / NRRL 1951 / Wisconsin 54-1255) (Penicillium chrysogenum).